Here is a 452-residue protein sequence, read N- to C-terminus: Pup--protein ligase (452 aa).

Position 9 (glutamate 9) interacts with Mg(2+). Arginine 53 serves as a coordination point for ATP. A Mg(2+)-binding site is contributed by tyrosine 55. Catalysis depends on aspartate 57, which acts as the Proton acceptor. A Mg(2+)-binding site is contributed by glutamate 63. The ATP site is built by threonine 66 and tryptophan 419.

This sequence belongs to the Pup ligase/Pup deamidase family. Pup-conjugating enzyme subfamily.

The enzyme catalyses ATP + [prokaryotic ubiquitin-like protein]-L-glutamate + [protein]-L-lysine = ADP + phosphate + N(6)-([prokaryotic ubiquitin-like protein]-gamma-L-glutamyl)-[protein]-L-lysine.. It participates in protein degradation; proteasomal Pup-dependent pathway. The protein operates within protein modification; protein pupylation. Its function is as follows. Catalyzes the covalent attachment of the prokaryotic ubiquitin-like protein modifier Pup to the proteasomal substrate proteins, thereby targeting them for proteasomal degradation. This tagging system is termed pupylation. The ligation reaction involves the side-chain carboxylate of the C-terminal glutamate of Pup and the side-chain amino group of a substrate lysine. This Salinispora arenicola (strain CNS-205) protein is Pup--protein ligase.